Here is an 833-residue protein sequence, read N- to C-terminus: RNA-binding protein 5-A (833 aa).

The tract at residues 1 to 87 (MGSDKRVSRS…GYHSDGDYMD (87 aa)) is disordered. The 81-residue stretch at 102 to 182 (KTIMLRGLPI…KTIAMHYSNP (81 aa)) folds into the RRM 1 domain. A RanBP2-type zinc finger spans residues 185–214 (KFEDWLCNKCGLYNFRRRLKCFRCGAAKAE). Positions 241 to 325 (SAIILRNIGP…KTIGVDFAKS (85 aa)) constitute an RRM 2 domain. Positions 396–428 (TGAAEQGTAPQAESSSPVPATTSAVVCQSPQMY) are enriched in polar residues. Disordered regions lie at residues 396–458 (TGAA…EEAA) and 523–559 (AADG…TAQQ). Positions 429-458 (QQPGSPTQSSTSTVAASATPASGTSAEEAA) are enriched in low complexity. The C2H2-type zinc-finger motif lies at 667 to 692 (LACLLCRRQFPNKDALTRHQQLSDLH). The region spanning 761 to 807 (NSNIGNKMLQAMGWKEGSGLGRKSQGITAPIQAQVRMRGAGLGAKGS) is the G-patch domain.

This sequence belongs to the RBM5/RBM10 family. Component of the spliceosome A complex (also known as the prespliceosome). Appears to dissociate from the spliceosome upon formation of the spliceosome B complex (also known as the precatalytic spliceosome), in which the heterotrimeric U4/U6.U5 snRNPs are bound.

Its subcellular location is the nucleus. Component of the spliceosome A complex. Regulates alternative splicing of a number of mRNAs. May modulate splice site pairing after recruitment of the U1 and U2 snRNPs to the 5' and 3' splice sites of the intron. This chain is RNA-binding protein 5-A (rbm5-a), found in Xenopus laevis (African clawed frog).